The following is a 131-amino-acid chain: Phosphomevalonate dehydratase small subunit (131 aa).

Serine 62 functions as the Proton acceptor in the catalytic mechanism.

The protein belongs to the AcnX type II small subunit family. As to quaternary structure, heterodimer composed of a large subunit (PMDh-L) and a small subunit (PMDh-S).

It catalyses the reaction (R)-5-phosphomevalonate = (2E)-3-methyl-5-phosphooxypent-2-enoate + H2O. The protein operates within isoprenoid biosynthesis; isopentenyl diphosphate biosynthesis via mevalonate pathway. Functionally, component of a hydro-lyase that catalyzes the dehydration of mevalonate 5-phosphate (MVA5P) to form trans-anhydromevalonate 5-phosphate (tAHMP). Involved in the archaeal mevalonate (MVA) pathway, which provides fundamental precursors for isoprenoid biosynthesis, such as isopentenyl diphosphate (IPP) and dimethylallyl diphosphate (DMAPP). The protein is Phosphomevalonate dehydratase small subunit of Methanothermobacter thermautotrophicus (strain ATCC 29096 / DSM 1053 / JCM 10044 / NBRC 100330 / Delta H) (Methanobacterium thermoautotrophicum).